Here is a 26-residue protein sequence, read N- to C-terminus: Hemocyanin subunit 3 (26 aa).

Belongs to the tyrosinase family. Hemocyanin subfamily. As to expression, hemolymph.

The protein resides in the secreted. The protein localises to the extracellular space. Its function is as follows. Hemocyanins are copper-containing oxygen carriers occurring freely dissolved in the hemolymph of many mollusks and arthropods. The sequence is that of Hemocyanin subunit 3 from Homarus americanus (American lobster).